Here is a 124-residue protein sequence, read N- to C-terminus: MPTINQLVRKGRRDKIAKVKTAALKGSPQRRGVCTRVYTTTPKKPNSALRKVARVRLTSAVEVTAYIPGEGHNLQEHSMVLVRGGRVKDLPGVRYKIIRGSLDTQGVKNRKQARSRYGAKKEKS.

Residue Asp89 is modified to 3-methylthioaspartic acid. Residues 105-124 (QGVKNRKQARSRYGAKKEKS) form a disordered region. Over residues 108 to 118 (KNRKQARSRYG) the composition is skewed to basic residues.

Belongs to the universal ribosomal protein uS12 family. In terms of assembly, part of the 30S ribosomal subunit. Contacts proteins S8 and S17. May interact with IF1 in the 30S initiation complex.

With S4 and S5 plays an important role in translational accuracy. In terms of biological role, interacts with and stabilizes bases of the 16S rRNA that are involved in tRNA selection in the A site and with the mRNA backbone. Located at the interface of the 30S and 50S subunits, it traverses the body of the 30S subunit contacting proteins on the other side and probably holding the rRNA structure together. The combined cluster of proteins S8, S12 and S17 appears to hold together the shoulder and platform of the 30S subunit. The protein is Small ribosomal subunit protein uS12 of Mycobacteroides abscessus (strain ATCC 19977 / DSM 44196 / CCUG 20993 / CIP 104536 / JCM 13569 / NCTC 13031 / TMC 1543 / L948) (Mycobacterium abscessus).